We begin with the raw amino-acid sequence, 322 residues long: Interferon regulatory factor 1 (322 aa).

A DNA-binding region (IRF tryptophan pentad repeat) is located at residues 5-113 (RMRMRPWLEM…SAVRVYRMLP (109 aa)). The residue at position 78 (Lys-78) is an N6-acetyllysine. Positions 92 to 164 (EEVKDQSRNK…STLPDDHSSY (73 aa)) are disordered. Polar residues predominate over residues 141 to 157 (GESSPDTFSDGLSSSTL). Glycyl lysine isopeptide (Lys-Gly) (interchain with G-Cter in SUMO) cross-links involve residues Lys-276 and Lys-296.

It belongs to the IRF family. As to quaternary structure, monomer. Homodimer. Interacts with EP300. Interacts with MYD88. Interacts with PIAS3. Interacts with SPOP. Phosphorylated by CK2 and this positively regulates its activity. In terms of processing, sumoylation represses the transcriptional activity and displays enhanced resistance to protein degradation. Sumoylated by UBE2I/UBC9 and SUMO1. Inactivates the tumor suppressor activity. Elevated levels in tumor cells. Major site is Lys-276. Sumoylation is enhanced by PIAS3. Desumoylated by SENP1 in tumor cells and appears to compete with ubiquitination on C-terminal sites. Post-translationally, ubiquitinated in a SPOP-depedent manner. Appears to compete with sumoylation on C-terminal sites.

The protein localises to the nucleus. Its subcellular location is the cytoplasm. With respect to regulation, activated by MYD88. Its function is as follows. Transcriptional regulator which displays a remarkable functional diversity in the regulation of cellular responses. Regulates transcription of IFN and IFN-inducible genes, host response to viral and bacterial infections, regulation of many genes expressed during hematopoiesis, inflammation, immune responses and cell proliferation and differentiation, regulation of the cell cycle and induction of growth arrest and programmed cell death following DNA damage. Stimulates both innate and acquired immune responses through the activation of specific target genes and can act as a transcriptional activator and repressor regulating target genes by binding to an interferon-stimulated response element (ISRE) in their promoters. Has an essentail role in IFNG-dependent immunity to mycobacteria. Binds to a consensus sequence in gene promoters. Its target genes for transcriptional activation activity include: genes involved in anti-viral response, such as IFN-alpha/beta, RIGI, TNFSF10/TRAIL, ZBP1, OAS1/2, PIAS1/GBP, EIF2AK2/PKR and RSAD2/viperin; antibacterial response, such as GBP2, GBP5 and NOS2/INOS; anti-proliferative response, such as p53/TP53, LOX and CDKN1A; apoptosis, such as BBC3/PUMA, CASP1, CASP7 and CASP8; immune response, such as IL7, IL12A/B and IL15, PTGS2/COX2 and CYBB; DNA damage responses and DNA repair, such as POLQ/POLH; MHC class I expression, such as TAP1, PSMB9/LMP2, PSME1/PA28A, PSME2/PA28B and B2M and MHC class II expression, such as CIITA; metabolic enzymes, such as ACOD1/IRG1. Represses genes involved in anti-proliferative response, such as BIRC5/survivin, CCNB1, CCNE1, CDK1, CDK2 and CDK4 and in immune response, such as FOXP3, IL4, ANXA2 and TLR4. Stimulates p53/TP53-dependent transcription through enhanced recruitment of EP300 leading to increased acetylation of p53/TP53. Plays an important role in immune response directly affecting NK maturation and activity, macrophage production of IL12, Th1 development and maturation of CD8+ T-cells. Also implicated in the differentiation and maturation of dendritic cells and in the suppression of regulatory T (Treg) cells development. Acts as a tumor suppressor and plays a role not only in antagonism of tumor cell growth but also in stimulating an immune response against tumor cells. The sequence is that of Interferon regulatory factor 1 (IRF1) from Sus scrofa (Pig).